The following is a 283-amino-acid chain: 4-diphosphocytidyl-2-C-methyl-D-erythritol kinase (283 aa).

Residue lysine 12 is part of the active site. An ATP-binding site is contributed by 94–104; that stretch reads PAQAGLGGGSS. Aspartate 136 is a catalytic residue.

It belongs to the GHMP kinase family. IspE subfamily.

It catalyses the reaction 4-CDP-2-C-methyl-D-erythritol + ATP = 4-CDP-2-C-methyl-D-erythritol 2-phosphate + ADP + H(+). It functions in the pathway isoprenoid biosynthesis; isopentenyl diphosphate biosynthesis via DXP pathway; isopentenyl diphosphate from 1-deoxy-D-xylulose 5-phosphate: step 3/6. Its function is as follows. Catalyzes the phosphorylation of the position 2 hydroxy group of 4-diphosphocytidyl-2C-methyl-D-erythritol. The polypeptide is 4-diphosphocytidyl-2-C-methyl-D-erythritol kinase (Acidovorax ebreus (strain TPSY) (Diaphorobacter sp. (strain TPSY))).